Consider the following 71-residue polypeptide: Sperm-associated antigen 11A (71 aa).

The signal sequence occupies residues 1–19 (MIPRLLPFFASLLFAALLF). Intrachain disulfides connect Cys32–Cys61, Cys39–Cys54, and Cys44–Cys62.

The protein belongs to the beta-defensin family.

The protein localises to the secreted. Functionally, has antimicrobial activity against E.coli. Plays a role in the defense response in the male reproductive tract, contributing to sperm maturation, storage and protection. This is Sperm-associated antigen 11A from Mus musculus (Mouse).